We begin with the raw amino-acid sequence, 353 residues long: Farnesyl pyrophosphate synthase (353 aa).

Residues Lys57, Arg60, and Gln96 each coordinate isopentenyl diphosphate. Lys57 carries the N6-(2-hydroxyisobutyryl)lysine; alternate modification. Lys57 bears the N6-acetyllysine; alternate mark. The Mg(2+) site is built by Asp103 and Asp107. Residue Arg112 coordinates dimethylallyl diphosphate. Arg113 lines the isopentenyl diphosphate pocket. Dimethylallyl diphosphate is bound by residues Lys200, Thr201, Gln240, Lys257, and Lys266.

The protein belongs to the FPP/GGPP synthase family. Homodimer. Interacts with RSAD2. It depends on Mg(2+) as a cofactor.

The protein resides in the cytoplasm. It carries out the reaction isopentenyl diphosphate + dimethylallyl diphosphate = (2E)-geranyl diphosphate + diphosphate. It catalyses the reaction isopentenyl diphosphate + (2E)-geranyl diphosphate = (2E,6E)-farnesyl diphosphate + diphosphate. The protein operates within isoprenoid biosynthesis; farnesyl diphosphate biosynthesis; farnesyl diphosphate from geranyl diphosphate and isopentenyl diphosphate: step 1/1. Its pathway is isoprenoid biosynthesis; geranyl diphosphate biosynthesis; geranyl diphosphate from dimethylallyl diphosphate and isopentenyl diphosphate: step 1/1. Its activity is regulated as follows. Inactivated by interferon-induced RSAD2. This inactivation may result of disruption of lipid rafts at the plasma membrane, and thus have an antiviral effect since many enveloped viruses need lipid rafts to bud efficiently out of the cell. Key enzyme in isoprenoid biosynthesis which catalyzes the formation of farnesyl diphosphate (FPP), a precursor for several classes of essential metabolites including sterols, dolichols, carotenoids, and ubiquinones. FPP also serves as substrate for protein farnesylation and geranylgeranylation. Catalyzes the sequential condensation of isopentenyl pyrophosphate with the allylic pyrophosphates, dimethylallyl pyrophosphate, and then with the resultant geranylpyrophosphate to the ultimate product farnesyl pyrophosphate. This Mus musculus (Mouse) protein is Farnesyl pyrophosphate synthase (Fdps).